The primary structure comprises 133 residues: uncharacterized protein (133 aa).

An N-terminal signal peptide occupies residues 1 to 22 (MYRSSISIQVFICVLFLPLDSG). N-linked (GlcNAc...) asparagine glycosylation is present at Asn111.

It localises to the secreted. This is an uncharacterized protein from Saccharomyces cerevisiae (strain ATCC 204508 / S288c) (Baker's yeast).